Consider the following 292-residue polypeptide: Inhibitory synaptic factor 1 (292 aa).

Residues 1 to 25 form a disordered region; that stretch reads MNIRGAPDLGQPSDDPNSGGERERI. The stretch at 30–63 forms a coiled coil; that stretch reads KMVIGQLEGILRELKEVAKELREVVSQIDKLTSD. Residues 120 to 292 form a disordered region; the sequence is TPSDSVDGPE…ATKQKAKGKN (173 aa). Residues 180-192 are compositionally biased toward basic and acidic residues; sequence GTRERVRFSDKVL. A compositionally biased stretch (acidic residues) spans 198–216; that stretch reads CDDEEGDGEEGEEEEEGDL. The segment covering 263 to 285 has biased composition (polar residues); sequence RNSSTQTVSDKSTQTVLPYTATK.

It belongs to the INSYN1 family. In terms of assembly, interacts with GPHN.

It is found in the postsynaptic density. Its function is as follows. Component of the protein machinery at the inhibitory synapses, probably acting as a scaffold. Inhibitory synapses dampen neuronal activity through postsynaptic hyperpolarization. This synaptic inhibition is fundamental for the functioning of the central nervous system, shaping and orchestrating the flow of information through neuronal networks to generate a precise neural code. The sequence is that of Inhibitory synaptic factor 1 (Insyn1) from Mus musculus (Mouse).